We begin with the raw amino-acid sequence, 422 residues long: UDP-N-acetylglucosamine 1-carboxyvinyltransferase (422 aa).

22-23 contacts phosphoenolpyruvate; sequence KN. Position 94 (Arg-94) interacts with UDP-N-acetyl-alpha-D-glucosamine. The active-site Proton donor is Cys-118. The residue at position 118 (Cys-118) is a 2-(S-cysteinyl)pyruvic acid O-phosphothioketal. Residues 123–127, Asp-309, and Ile-331 contribute to the UDP-N-acetyl-alpha-D-glucosamine site; that span reads RPVDL.

The protein belongs to the EPSP synthase family. MurA subfamily.

The protein resides in the cytoplasm. It catalyses the reaction phosphoenolpyruvate + UDP-N-acetyl-alpha-D-glucosamine = UDP-N-acetyl-3-O-(1-carboxyvinyl)-alpha-D-glucosamine + phosphate. It participates in cell wall biogenesis; peptidoglycan biosynthesis. Cell wall formation. Adds enolpyruvyl to UDP-N-acetylglucosamine. This is UDP-N-acetylglucosamine 1-carboxyvinyltransferase from Cereibacter sphaeroides (strain ATCC 17029 / ATH 2.4.9) (Rhodobacter sphaeroides).